Here is a 218-residue protein sequence, read N- to C-terminus: Pyridoxine/pyridoxamine 5'-phosphate oxidase (218 aa).

Residues 14 to 17 and Lys72 contribute to the substrate site; that span reads RREY. FMN-binding positions include 67 to 72, 82 to 83, Arg88, Lys89, and Gln111; these read RIVLLK and YT. Substrate contacts are provided by Tyr129, Arg133, and Ser137. FMN-binding positions include 146-147 and Trp191; that span reads QS. 197–199 contacts substrate; it reads RLH. Arg201 is an FMN binding site.

The protein belongs to the pyridoxamine 5'-phosphate oxidase family. Homodimer. The cofactor is FMN.

The catalysed reaction is pyridoxamine 5'-phosphate + O2 + H2O = pyridoxal 5'-phosphate + H2O2 + NH4(+). The enzyme catalyses pyridoxine 5'-phosphate + O2 = pyridoxal 5'-phosphate + H2O2. It participates in cofactor metabolism; pyridoxal 5'-phosphate salvage; pyridoxal 5'-phosphate from pyridoxamine 5'-phosphate: step 1/1. The protein operates within cofactor metabolism; pyridoxal 5'-phosphate salvage; pyridoxal 5'-phosphate from pyridoxine 5'-phosphate: step 1/1. Functionally, catalyzes the oxidation of either pyridoxine 5'-phosphate (PNP) or pyridoxamine 5'-phosphate (PMP) into pyridoxal 5'-phosphate (PLP). The protein is Pyridoxine/pyridoxamine 5'-phosphate oxidase of Escherichia coli (strain 55989 / EAEC).